A 159-amino-acid chain; its full sequence is Cytochrome c nitrite reductase subunit NrfH (159 aa).

The Cytoplasmic segment spans residues 2-14 (SEEKSRNGPARLK). A helical; Signal-anchor for type II membrane protein transmembrane segment spans residues 15-33 (LVLGGATLGVVALATVAFG). Residues 34–159 (MKYTDQRPFC…PISTREVADE (126 aa)) lie on the Periplasmic side of the membrane. 5 residues coordinate heme: Cys-43, Cys-46, Met-49, His-61, and Cys-66. Asn-67 contributes to the a menaquinol binding site. Positions 69 and 70 each coordinate heme. A menaquinol-binding residues include Lys-82 and Asp-89. A heme-binding site is contributed by Asp-89. The interval 99–100 (GD) is interaction with NrfA. The heme site is built by Cys-116, Cys-119, His-120, Cys-136, Cys-139, His-140, and His-145. Positions 123–158 (TNVEVASMEAKKYCTDCHRNVQHMRMKPISTREVAD) are interaction with NrfA.

Belongs to the NapC/NirT/NrfH family. In terms of assembly, component of the NrfHA cytochrome c nitrite reductase complex composed of 4 NrfA catalytic subunits and 2 NrfH quinone-binding subunits. Interacts with NrfA homodimer. Heme serves as cofactor.

It is found in the cell inner membrane. In terms of biological role, electron donor subunit of the cytochrome c nitrite reductase holocomplex NrfHA. Acquires electrons from the menaquinone pool and mediates their transfer to the catalytic subunit NrfA in an anaerobic respiratory process of nitrite. The other biological function of the NrfHA holocomplex is to detoxify nitrite. This function is essential for the survival of this organism as it enables it to overcome inhibition by nitrite, which is produced by other organisms living in the same environment. This is Cytochrome c nitrite reductase subunit NrfH from Nitratidesulfovibrio vulgaris (strain ATCC 29579 / DSM 644 / CCUG 34227 / NCIMB 8303 / VKM B-1760 / Hildenborough) (Desulfovibrio vulgaris).